We begin with the raw amino-acid sequence, 89 residues long: Co-chaperonin GroES (89 aa).

Belongs to the GroES chaperonin family. As to quaternary structure, heptamer of 7 subunits arranged in a ring. Interacts with the chaperonin GroEL.

It is found in the cytoplasm. Together with the chaperonin GroEL, plays an essential role in assisting protein folding. The GroEL-GroES system forms a nano-cage that allows encapsulation of the non-native substrate proteins and provides a physical environment optimized to promote and accelerate protein folding. GroES binds to the apical surface of the GroEL ring, thereby capping the opening of the GroEL channel. The sequence is that of Co-chaperonin GroES from Porphyromonas gingivalis (strain ATCC 33277 / DSM 20709 / CIP 103683 / JCM 12257 / NCTC 11834 / 2561).